A 1295-amino-acid polypeptide reads, in one-letter code: Unconventional myosin-VI (1295 aa).

Residues 2-53 (EDGRPVWAPHPTEGFQMGNIVDIGPDSLTIEPLGQKGKTFLALINQVFPAEE) form the Myosin N-terminal SH3-like domain. The region spanning 57 to 771 (KDVEDNCSLM…KFAEFDQIMK (715 aa)) is the Myosin motor domain. Residue 151–158 (GESGAGKT) coordinates ATP. A Phosphoserine modification is found at serine 267. Positions 273–317 (YLNRGCTRYFANKETDKQILQNRKTPEHLKAGSLKDPLLDDHGDF) are responsible for slow ATPase activity. Threonine 405 carries the phosphothreonine modification. A Phosphoserine modification is found at serine 604. The interval 651–673 (LNLLLDKLRSTGASFIRCIKPNL) is actin-binding. The tract at residues 782 to 810 (KRVNHWLICSRWKKVQWCSLSVIKLKNKI) is required for binding calmodulin. Positions 813–842 (RAEACIKMQKTIRMWLCKRRHKPRIDGLVK) constitute an IQ domain. The three-helix bundle stretch occupies residues 835 to 916 (PRIDGLVKVG…EVLLSALQKK (82 aa)). The interval 917 to 984 (KQQEEEAERL…EDDEKRIQAE (68 aa)) is SAH. Positions 934–955 (EKERKRREEDEQRRRKEEEERR) are disordered. The segment at 1061-1286 (KEMSEILSRG…ESRQARPTYA (226 aa)) is interaction with TAX1BP1 and CALCOCO2/NDP52. The interaction with OPTN stretch occupies residues 1117-1119 (RRL). Serine 1156 carries the post-translational modification Phosphoserine. The segment at 1158-1286 (QQNPAAQLPA…ESRQARPTYA (129 aa)) is interaction with TOM1.

It belongs to the TRAFAC class myosin-kinesin ATPase superfamily. Myosin family. Homodimer; dimerization seems to implicate the unfolding of the three-helix bundle region creating an additional calmodulin binding site, and cargo binding. Able to function as a monomer under specific conditions in vitro. Forms a complex with CFTR and DAB2 in the apical membrane of epithelial cells. Component of the DISP/DOCK7-induced septin displacement complex, at least composed of DOCK7, LRCH3 and MYO6. Binding to calmodulin through a unique insert, not found in other myosins, located in the neck region between the motor domain and the IQ domain appears to contribute to the directionality reversal. This interaction occurs only if the C-terminal lobe of calmodulin is occupied by calcium. Interaction with F-actin/ACTN1 occurs only at the apical brush border domain of the proximal tubule cells. Interacts with DAB2. In vitro, the C-terminal globular tail binds a C-terminal region of DAB2. Interacts with CFTR. Interacts with CABP5. Interacts (via residues 1158-1286) with TOM1 (via residues 392-463). Interacts (via residues 1060-1285) with OPTN. Interacts (via residues 1060-1285) with TAX1BP1 and CALCOCO2/NDP52. Interacts with TOM1L2. Interacts with CLIC5; may work together in a complex which also includes RDX and MYO6 to stabilize linkages between the plasma membrane and subjacent actin cytoskeleton at the base of stereocilia. In terms of processing, phosphorylation in the motor domain, induced by EGF, results in translocation of MYO6 from the cell surface to membrane ruffles and affects F-actin dynamics. Phosphorylated in vitro by p21-activated kinase (PAK). Expressed in the retina (at protein level).

The protein resides in the golgi apparatus. It localises to the trans-Golgi network membrane. It is found in the nucleus. Its subcellular location is the cytoplasm. The protein localises to the perinuclear region. The protein resides in the membrane. It localises to the clathrin-coated pit. It is found in the cytoplasmic vesicle. Its subcellular location is the clathrin-coated vesicle. The protein localises to the cell projection. The protein resides in the filopodium. It localises to the ruffle membrane. It is found in the microvillus. Its subcellular location is the cytosol. Functionally, myosins are actin-based motor molecules with ATPase activity. Unconventional myosins serve in intracellular movements. Myosin 6 is a reverse-direction motor protein that moves towards the minus-end of actin filaments. Has slow rate of actin-activated ADP release due to weak ATP binding. Functions in a variety of intracellular processes such as vesicular membrane trafficking and cell migration. Required for the structural integrity of the Golgi apparatus via the p53-dependent pro-survival pathway. Appears to be involved in a very early step of clathrin-mediated endocytosis in polarized epithelial cells. Together with TOM1, mediates delivery of endocytic cargo to autophagosomes thereby promoting autophagosome maturation and driving fusion with lysosomes. Links TOM1 with autophagy receptors, such as TAX1BP1; CALCOCO2/NDP52 and OPTN. May act as a regulator of F-actin dynamics. As part of the DISP complex, may regulate the association of septins with actin and thereby regulate the actin cytoskeleton. May play a role in transporting DAB2 from the plasma membrane to specific cellular targets. May play a role in the extension and network organization of neurites. Required for structural integrity of inner ear hair cells. Required for the correct localization of CLIC5 and RDX at the stereocilium base. Modulates RNA polymerase II-dependent transcription. This chain is Unconventional myosin-VI, found in Bos taurus (Bovine).